A 122-amino-acid polypeptide reads, in one-letter code: Serum amyloid A-3 protein (122 aa).

The first 18 residues, 1 to 18, serve as a signal peptide directing secretion; sequence MKLSIGIIFCFLILGVNS. A disordered region spans residues 88–122; that stretch reads GRGAEDSKADQEANQWGRSGNDPNHFRPKGLPDKY. Residues 99-109 are compositionally biased toward polar residues; it reads EANQWGRSGND.

It belongs to the SAA family. Expressed by the liver; secreted in plasma. Expressed in synovial fibroblasts.

It is found in the secreted. In terms of biological role, major acute phase reactant. Apolipoprotein of the HDL complex. In vitro exhibits antimicrobial activity against Escherichia coli, Streptococcus uberis and Pseudomonas aeruginosa. The sequence is that of Serum amyloid A-3 protein (SAA3) from Oryctolagus cuniculus (Rabbit).